The primary structure comprises 317 residues: tRNA dimethylallyltransferase (317 aa).

19 to 26 (GPTASGKS) serves as a coordination point for ATP. Position 21-26 (21-26 (TASGKS)) interacts with substrate. The interval 44–47 (DSMQ) is interaction with substrate tRNA.

Belongs to the IPP transferase family. Monomer. It depends on Mg(2+) as a cofactor.

It catalyses the reaction adenosine(37) in tRNA + dimethylallyl diphosphate = N(6)-dimethylallyladenosine(37) in tRNA + diphosphate. Functionally, catalyzes the transfer of a dimethylallyl group onto the adenine at position 37 in tRNAs that read codons beginning with uridine, leading to the formation of N6-(dimethylallyl)adenosine (i(6)A). This chain is tRNA dimethylallyltransferase, found in Methylorubrum extorquens (strain CM4 / NCIMB 13688) (Methylobacterium extorquens).